The sequence spans 203 residues: Urease accessory protein UreG (203 aa).

14 to 21 (GPVGSGKT) contributes to the GTP binding site.

Belongs to the SIMIBI class G3E GTPase family. UreG subfamily. Homodimer. UreD, UreF and UreG form a complex that acts as a GTP-hydrolysis-dependent molecular chaperone, activating the urease apoprotein by helping to assemble the nickel containing metallocenter of UreC. The UreE protein probably delivers the nickel.

It is found in the cytoplasm. Facilitates the functional incorporation of the urease nickel metallocenter. This process requires GTP hydrolysis, probably effectuated by UreG. The sequence is that of Urease accessory protein UreG from Rhizobium leguminosarum bv. viciae.